The chain runs to 950 residues: Leucine--tRNA ligase 2 (950 aa).

A 'HIGH' region motif is present at residues 47–57 (PYPNSPFHLGH). The short motif at 631 to 635 (KMSKS) is the 'KMSKS' region element. Lys-634 contributes to the ATP binding site.

The protein belongs to the class-I aminoacyl-tRNA synthetase family.

It is found in the cytoplasm. It catalyses the reaction tRNA(Leu) + L-leucine + ATP = L-leucyl-tRNA(Leu) + AMP + diphosphate. The protein is Leucine--tRNA ligase 2 of Metallosphaera sedula (strain ATCC 51363 / DSM 5348 / JCM 9185 / NBRC 15509 / TH2).